A 1005-amino-acid polypeptide reads, in one-letter code: Negative regulator of pleiotropic drug resistance STB5 (1005 aa).

Residues Met1 to Glu28 are disordered. Residues Cys32–Cys59 constitute a DNA-binding region (zn(2)-C6 fungal-type). Disordered regions lie at residues Gly129–Arg151, Lys666–Lys693, and Thr763–Arg831. Basic and acidic residues predominate over residues Lys673 to Lys693. Residues Thr763 to Gln773 show a composition bias toward polar residues. The span at Glu792–Asn801 shows a compositional bias: basic and acidic residues.

It is found in the nucleus. Functionally, transcription factor that negatively regulates pleiotropic drug resistance genes, including the ABC transporter genes CDR1, PDH1, and YOR1. This is Negative regulator of pleiotropic drug resistance STB5 from Candida glabrata (strain ATCC 2001 / BCRC 20586 / JCM 3761 / NBRC 0622 / NRRL Y-65 / CBS 138) (Yeast).